Here is a 430-residue protein sequence, read N- to C-terminus: KIN17-like protein (430 aa).

A C2H2-type zinc finger spans residues Cys-28–His-50. A winged helix-turn-helix (wHTH) region spans residues Gln-51–Lys-160. Positions Glu-147–Ser-183 form a coiled coil. Residues Lys-155 to Arg-158 carry the Nuclear localization signal (NLS) motif. 2 disordered regions span residues Arg-179 to Ala-230 and Glu-261 to Ala-284. Acidic residues predominate over residues Glu-209–Ala-224. Over residues Glu-261 to Lys-278 the composition is skewed to basic and acidic residues. Residues Asp-283 to Lys-312 are a coiled coil. The segment at Gly-319–Thr-370 is C-terminal subdomain A. The tract at residues Gly-376 to Lys-427 is C-terminal subdomain B.

Belongs to the KIN17 family.

It localises to the nucleus. In Oryza sativa subsp. indica (Rice), this protein is KIN17-like protein.